We begin with the raw amino-acid sequence, 369 residues long: tRNA 2-selenouridine synthase (369 aa).

A Rhodanese domain is found at 12–136 (FLEDTPLMDV…LRNFLFETTR (125 aa)). Catalysis depends on Cys-95, which acts as the S-selanylcysteine intermediate.

It belongs to the SelU family. Monomer.

It catalyses the reaction 5-methylaminomethyl-2-thiouridine(34) in tRNA + selenophosphate + (2E)-geranyl diphosphate + H2O + H(+) = 5-methylaminomethyl-2-selenouridine(34) in tRNA + (2E)-thiogeraniol + phosphate + diphosphate. The enzyme catalyses 5-methylaminomethyl-2-thiouridine(34) in tRNA + (2E)-geranyl diphosphate = 5-methylaminomethyl-S-(2E)-geranyl-thiouridine(34) in tRNA + diphosphate. The catalysed reaction is 5-methylaminomethyl-S-(2E)-geranyl-thiouridine(34) in tRNA + selenophosphate + H(+) = 5-methylaminomethyl-2-(Se-phospho)selenouridine(34) in tRNA + (2E)-thiogeraniol. It carries out the reaction 5-methylaminomethyl-2-(Se-phospho)selenouridine(34) in tRNA + H2O = 5-methylaminomethyl-2-selenouridine(34) in tRNA + phosphate. Involved in the post-transcriptional modification of the uridine at the wobble position (U34) of tRNA(Lys), tRNA(Glu) and tRNA(Gln). Catalyzes the conversion of 2-thiouridine (S2U-RNA) to 2-selenouridine (Se2U-RNA). Acts in a two-step process involving geranylation of 2-thiouridine (S2U) to S-geranyl-2-thiouridine (geS2U) and subsequent selenation of the latter derivative to 2-selenouridine (Se2U) in the tRNA chain. The polypeptide is tRNA 2-selenouridine synthase (Pseudomonas paraeruginosa (strain DSM 24068 / PA7) (Pseudomonas aeruginosa (strain PA7))).